The sequence spans 156 residues: Peptide methionine sulfoxide reductase MsrA (156 aa).

The active site involves cysteine 10.

This sequence belongs to the MsrA Met sulfoxide reductase family.

It catalyses the reaction L-methionyl-[protein] + [thioredoxin]-disulfide + H2O = L-methionyl-(S)-S-oxide-[protein] + [thioredoxin]-dithiol. The catalysed reaction is [thioredoxin]-disulfide + L-methionine + H2O = L-methionine (S)-S-oxide + [thioredoxin]-dithiol. Functionally, has an important function as a repair enzyme for proteins that have been inactivated by oxidation. Catalyzes the reversible oxidation-reduction of methionine sulfoxide in proteins to methionine. The chain is Peptide methionine sulfoxide reductase MsrA from Metamycoplasma arthritidis (strain 158L3-1) (Mycoplasma arthritidis).